The following is a 151-amino-acid chain: Transcriptional repressor NrdR (151 aa).

A zinc finger spans residues 3–34 (CPYCGYGESKVVDSRATDDKMAIRRRRECLKC). In terms of domain architecture, ATP-cone spans 49 to 139 (LLVIKKNMSR…VYRQFKDINT (91 aa)).

It belongs to the NrdR family. The cofactor is Zn(2+).

Negatively regulates transcription of bacterial ribonucleotide reductase nrd genes and operons by binding to NrdR-boxes. This Clostridium kluyveri (strain NBRC 12016) protein is Transcriptional repressor NrdR.